We begin with the raw amino-acid sequence, 100 residues long: MELTPREKDKLLIFTASLLAERRRARGLKLNYPEAVALISAAVMEGARDGKTVAQLMSEGRTVLTRADVMDGIAELIPDIQVEATFPDGTKLVTVHQPIV.

This sequence belongs to the urease gamma subunit family. In terms of assembly, heterotrimer of UreA (gamma), UreB (beta) and UreC (alpha) subunits. Three heterotrimers associate to form the active enzyme.

The protein localises to the cytoplasm. It catalyses the reaction urea + 2 H2O + H(+) = hydrogencarbonate + 2 NH4(+). Its pathway is nitrogen metabolism; urea degradation; CO(2) and NH(3) from urea (urease route): step 1/1. The sequence is that of Urease subunit gamma from Polaromonas naphthalenivorans (strain CJ2).